A 438-amino-acid polypeptide reads, in one-letter code: Adenylosuccinate synthetase (438 aa).

GTP-binding positions include 12–18 (GDEGKGK) and 40–42 (GHT). Aspartate 13 (proton acceptor) is an active-site residue. Mg(2+) is bound by residues aspartate 13 and glycine 40. Residues 13–16 (DEGK), 38–41 (NAGH), threonine 128, arginine 142, glutamine 223, threonine 238, and arginine 302 each bind IMP. The active-site Proton donor is the histidine 41. Residue 298 to 304 (TTTGRPR) participates in substrate binding. Residues arginine 304, 330–332 (KLD), and 412–414 (GVG) each bind GTP.

Belongs to the adenylosuccinate synthetase family. Homodimer. It depends on Mg(2+) as a cofactor.

It localises to the cytoplasm. It catalyses the reaction IMP + L-aspartate + GTP = N(6)-(1,2-dicarboxyethyl)-AMP + GDP + phosphate + 2 H(+). It participates in purine metabolism; AMP biosynthesis via de novo pathway; AMP from IMP: step 1/2. Functionally, plays an important role in the de novo pathway of purine nucleotide biosynthesis. Catalyzes the first committed step in the biosynthesis of AMP from IMP. The chain is Adenylosuccinate synthetase from Leifsonia xyli subsp. xyli (strain CTCB07).